We begin with the raw amino-acid sequence, 400 residues long: MRTIDDLQVTGHRVLVRSDLNVPLDHSKGAPRITDDGRVRASVPTIQALLDRNAKVIVCSHLGRPKGAPEEKYSLAPVAERLAELLGIPVAFAGDGGGDIAGDRAREVVGQLAEGQVALLENLRFHPGETSKDTVARATFADELSALAEFYVGDAFGAVHRAHASVSEVPKRLPHAAGRLVLTELEVLRALTAAPARPYAVVLGGSKVSDKLGVIRALLPKVDALLVGGGMCFTFLAALGHPVGASLLESEMIDTCKDLLAEAGDRLVLPTDVVVADRFAADAETAVVAADAIPDGWLGLDIGPASTAAFARVVAGAATIFWNGPMGVFEFAPFAEGTRGVAEAVASGGGFSVVGGGDSAAAVRILGIPEDDFSHISTGGGASLEYLEGKTLPGLAALDV.

Residues 19–21 (DLN), arginine 38, 61–64 (HLGR), arginine 124, and arginine 161 each bind substrate. ATP-binding positions include lysine 211, glycine 299, glutamate 330, and 356–359 (GGDS).

It belongs to the phosphoglycerate kinase family. As to quaternary structure, monomer.

The protein localises to the cytoplasm. It catalyses the reaction (2R)-3-phosphoglycerate + ATP = (2R)-3-phospho-glyceroyl phosphate + ADP. It participates in carbohydrate degradation; glycolysis; pyruvate from D-glyceraldehyde 3-phosphate: step 2/5. This Parafrankia sp. (strain EAN1pec) protein is Phosphoglycerate kinase.